The primary structure comprises 250 residues: 2,3-bisphosphoglycerate-dependent phosphoglycerate mutase (250 aa).

Residues R10 to N17, T23 to G24, R62, E89 to Y92, K100, R116 to R117, and G185 to N186 each bind substrate. The active-site Tele-phosphohistidine intermediate is H11. Residue E89 is the Proton donor/acceptor of the active site.

This sequence belongs to the phosphoglycerate mutase family. BPG-dependent PGAM subfamily. As to quaternary structure, homodimer.

The catalysed reaction is (2R)-2-phosphoglycerate = (2R)-3-phosphoglycerate. It participates in carbohydrate degradation; glycolysis; pyruvate from D-glyceraldehyde 3-phosphate: step 3/5. Its function is as follows. Catalyzes the interconversion of 2-phosphoglycerate and 3-phosphoglycerate. The protein is 2,3-bisphosphoglycerate-dependent phosphoglycerate mutase of Klebsiella pneumoniae (strain 342).